Consider the following 224-residue polypeptide: 7-cyano-7-deazaguanine synthase (224 aa).

Residue 12-22 coordinates ATP; the sequence is LSGGLDSSTVT. Zn(2+)-binding residues include cysteine 193, cysteine 201, cysteine 204, and cysteine 207.

This sequence belongs to the QueC family. Zn(2+) is required as a cofactor.

The enzyme catalyses 7-carboxy-7-deazaguanine + NH4(+) + ATP = 7-cyano-7-deazaguanine + ADP + phosphate + H2O + H(+). The protein operates within purine metabolism; 7-cyano-7-deazaguanine biosynthesis. In terms of biological role, catalyzes the ATP-dependent conversion of 7-carboxy-7-deazaguanine (CDG) to 7-cyano-7-deazaguanine (preQ(0)). The protein is 7-cyano-7-deazaguanine synthase of Prochlorococcus marinus (strain MIT 9312).